Consider the following 180-residue polypeptide: RNA polymerase sigma-E factor (180 aa).

A Polymerase core binding motif is present at residues 36–49 (DLLQTALARTYGRW). Positions 130 to 149 (TEETAAALGMSAGTVKSTLH) form a DNA-binding region, H-T-H motif.

It belongs to the sigma-70 factor family. ECF subfamily.

It is found in the cytoplasm. Functionally, sigma factors are initiation factors that promote the attachment of RNA polymerase to specific initiation sites and are then released. This sigma factor is required for the synthesis of the antibiotic actinomycin. This Streptomyces antibioticus protein is RNA polymerase sigma-E factor (sigE).